A 486-amino-acid polypeptide reads, in one-letter code: ATP synthase subunit beta (486 aa).

Residues 1 to 12 show a composition bias toward basic and acidic residues; the sequence is MTTTAEKTDRPG. The disordered stretch occupies residues 1–22; it reads MTTTAEKTDRPGKPGSSDTSGR. 171 to 178 lines the ATP pocket; the sequence is GGAGVGKT.

It belongs to the ATPase alpha/beta chains family. F-type ATPases have 2 components, CF(1) - the catalytic core - and CF(0) - the membrane proton channel. CF(1) has five subunits: alpha(3), beta(3), gamma(1), delta(1), epsilon(1). CF(0) has three main subunits: a(1), b(2) and c(9-12). The alpha and beta chains form an alternating ring which encloses part of the gamma chain. CF(1) is attached to CF(0) by a central stalk formed by the gamma and epsilon chains, while a peripheral stalk is formed by the delta and b chains.

It is found in the cell membrane. The catalysed reaction is ATP + H2O + 4 H(+)(in) = ADP + phosphate + 5 H(+)(out). Produces ATP from ADP in the presence of a proton gradient across the membrane. The catalytic sites are hosted primarily by the beta subunits. The polypeptide is ATP synthase subunit beta (Mycobacterium tuberculosis (strain ATCC 25177 / H37Ra)).